An 835-amino-acid chain; its full sequence is Protein translocase subunit SecA (835 aa).

Residues glutamine 85, 103–107 (GEGKT), and aspartate 492 each bind ATP. Residues 788-807 (VQGEAVHPSSDGEEAKKKPV) are disordered. 4 residues coordinate Zn(2+): cysteine 819, cysteine 821, cysteine 830, and cysteine 831.

It belongs to the SecA family. Monomer and homodimer. Part of the essential Sec protein translocation apparatus which comprises SecA, SecYEG and auxiliary proteins SecDF. Other proteins may also be involved. Zn(2+) is required as a cofactor.

The protein localises to the cell membrane. Its subcellular location is the cytoplasm. The catalysed reaction is ATP + H2O + cellular proteinSide 1 = ADP + phosphate + cellular proteinSide 2.. Its function is as follows. Part of the Sec protein translocase complex. Interacts with the SecYEG preprotein conducting channel. Has a central role in coupling the hydrolysis of ATP to the transfer of proteins into and across the cell membrane, serving as an ATP-driven molecular motor driving the stepwise translocation of polypeptide chains across the membrane. This Bacillus cereus (strain G9842) protein is Protein translocase subunit SecA.